A 182-amino-acid polypeptide reads, in one-letter code: Lipid A acyltransferase PagP (182 aa).

Positions 1–21 are cleaved as a signal peptide; sequence MTQYFRSLAFFLLPVPATAMA. A lipid anchor (N-palmitoyl cysteine) is attached at cysteine 22. A lipid anchor (S-diacylglycerol cysteine) is attached at cysteine 22. Catalysis depends on residues histidine 55, aspartate 98, and serine 99.

Belongs to the lipid A palmitoyltransferase family. As to quaternary structure, homodimer.

Its subcellular location is the cell outer membrane. The enzyme catalyses a lipid A + a 1,2-diacyl-sn-glycero-3-phosphocholine = a hepta-acyl lipid A + a 2-acyl-sn-glycero-3-phosphocholine. It catalyses the reaction a lipid IVA + a 1,2-diacyl-sn-glycero-3-phosphocholine = a lipid IVB + a 2-acyl-sn-glycero-3-phosphocholine. The catalysed reaction is a lipid IIA + a 1,2-diacyl-sn-glycero-3-phosphocholine = a lipid IIB + a 2-acyl-sn-glycero-3-phosphocholine. Its function is as follows. Transfers a fatty acid residue from the sn-1 position of a phospholipid to the N-linked hydroxyfatty acid chain on the proximal unit of lipid A or its precursors. The protein is Lipid A acyltransferase PagP of Bordetella pertussis (strain CS).